The sequence spans 605 residues: Pescadillo homolog (605 aa).

The BRCT domain occupies Pro-346 to Pro-440. The disordered stretch occupies residues Ser-449–Lys-553. Over residues Ala-461 to Glu-508 the composition is skewed to acidic residues. The segment covering Glu-526 to Asp-537 has biased composition (basic and acidic residues). A coiled-coil region spans residues Ser-533–Lys-605.

This sequence belongs to the pescadillo family. Component of the NOP7 complex, composed of ERB1, NOP7 and YTM1. The complex is held together by ERB1, which interacts with NOP7 via its N-terminal domain and with YTM1 via a high-affinity interaction between the seven-bladed beta-propeller domains of the 2 proteins. The NOP7 complex associates with the 66S pre-ribosome.

The protein resides in the nucleus. It is found in the nucleolus. Its subcellular location is the nucleoplasm. Functionally, component of the NOP7 complex, which is required for maturation of the 25S and 5.8S ribosomal RNAs and formation of the 60S ribosome. This chain is Pescadillo homolog, found in Kluyveromyces lactis (strain ATCC 8585 / CBS 2359 / DSM 70799 / NBRC 1267 / NRRL Y-1140 / WM37) (Yeast).